The sequence spans 302 residues: Oxygen-dependent coproporphyrinogen-III oxidase (302 aa).

S94 is a binding site for substrate. Residues H98 and H108 each coordinate a divalent metal cation. H108 serves as the catalytic Proton donor. Residue 110 to 112 coordinates substrate; sequence NVR. H147 and H177 together coordinate a divalent metal cation. Residues 242–277 form an important for dimerization region; the sequence is YVEFNLVYDRGTLFGLQTGGRTESILMSMPPLVRWQ. 260 to 262 serves as a coordination point for substrate; sequence GGR.

This sequence belongs to the aerobic coproporphyrinogen-III oxidase family. Homodimer. Requires a divalent metal cation as cofactor.

It is found in the cytoplasm. It catalyses the reaction coproporphyrinogen III + O2 + 2 H(+) = protoporphyrinogen IX + 2 CO2 + 2 H2O. Its pathway is porphyrin-containing compound metabolism; protoporphyrin-IX biosynthesis; protoporphyrinogen-IX from coproporphyrinogen-III (O2 route): step 1/1. Its function is as follows. Involved in the heme biosynthesis. Catalyzes the aerobic oxidative decarboxylation of propionate groups of rings A and B of coproporphyrinogen-III to yield the vinyl groups in protoporphyrinogen-IX. This Shewanella baltica (strain OS155 / ATCC BAA-1091) protein is Oxygen-dependent coproporphyrinogen-III oxidase.